A 491-amino-acid chain; its full sequence is COP9 signalosome complex subunit 1 (491 aa).

One can recognise a PCI domain in the interval Cys269–Gln431. A disordered region spans residues His465–Met491. Residues Ser468 and Ser474 each carry the phosphoserine modification. Residues Gly476–Met491 show a composition bias toward polar residues. Thr479 is modified (phosphothreonine). Ser483 carries the phosphoserine modification.

It belongs to the CSN1 family. As to quaternary structure, component of the CSN complex, composed of COPS1/GPS1, COPS2, COPS3, COPS4, COPS5, COPS6, COPS7 (COPS7A or COPS7B), COPS8 and COPS9 isoform 1. In the complex, it probably interacts directly with COPS2, COPS3, COPS4 and COPS5. Interacts directly with inositol kinase ITPK1. Interacts with CAPN8. Interacts with USP48. Interacts with ASB4; this interaction negatively regulates GPS1. As to expression, widely expressed.

Its subcellular location is the cytoplasm. It is found in the nucleus. Functionally, essential component of the COP9 signalosome complex (CSN), a complex involved in various cellular and developmental processes. The CSN complex is an essential regulator of the ubiquitin (Ubl) conjugation pathway by mediating the deneddylation of the cullin subunits of SCF-type E3 ligase complexes, leading to decrease the Ubl ligase activity of SCF-type complexes such as SCF, CSA or DDB2. The complex is also involved in phosphorylation of p53/TP53, c-jun/JUN, IkappaBalpha/NFKBIA, ITPK1 and IRF8/ICSBP, possibly via its association with CK2 and PKD kinases. CSN-dependent phosphorylation of TP53 and JUN promotes and protects degradation by the Ubl system, respectively. Suppresses G-protein- and mitogen-activated protein kinase-mediated signal transduction. The protein is COP9 signalosome complex subunit 1 (GPS1) of Homo sapiens (Human).